The primary structure comprises 111 residues: MKRTAWNIVFHSLIGLRARVLATSDPGLRGLEGVVVEETRHSLVVETRDGRRVRVLKANSIFLFQLPGGSWVVVRGEEIAGSLAERVKRLGRLKGVGWLVRAGEKRRYTRG.

It belongs to the eukaryotic/archaeal RNase P protein component 1 family. As to quaternary structure, consists of a catalytic RNA component and at least 4-5 protein subunits.

Its subcellular location is the cytoplasm. It catalyses the reaction Endonucleolytic cleavage of RNA, removing 5'-extranucleotides from tRNA precursor.. Its function is as follows. Part of ribonuclease P, a protein complex that generates mature tRNA molecules by cleaving their 5'-ends. The protein is Ribonuclease P protein component 1 of Hyperthermus butylicus (strain DSM 5456 / JCM 9403 / PLM1-5).